A 188-amino-acid polypeptide reads, in one-letter code: MGIDINHKYDRKVRRTEPKSQDVYLRLLVKLYRFLQRRTNKKFNRIILKRLFMSKINRPPLSLQRIARFFKAANQPESTIVVVGTVTDDARLLVVPKLTVCALHVTQTARERILKAGGEVLTFDQLALRSPTGKNTLLLQGRRTARTACKHFGKAPGVPHSHTRPYVRSKGRKFERARGRRSSCGYKK.

It belongs to the eukaryotic ribosomal protein eL18 family.

The protein resides in the cytoplasm. This chain is Large ribosomal subunit protein eL18 (RpL18), found in Drosophila melanogaster (Fruit fly).